The following is a 439-amino-acid chain: Chromosomal replication initiator protein DnaA (439 aa).

The domain I, interacts with DnaA modulators stretch occupies residues 1–75; that stretch reads MESWSRCLER…GIREVVLAIG (75 aa). The tract at residues 75 to 101 is domain II; sequence GSRPKTTELPVPVDTTGRLSSTVPFNG. Positions 102–319 are domain III, AAA+ region; sequence NLDTHYNFDN…GALNTLVARA (218 aa). Residues Gly-147, Gly-149, Lys-150, and Thr-151 each coordinate ATP. Residues 320-439 are domain IV, binds dsDNA; that stretch reads NFTGRAVTIE…WDKLMRKFSE (120 aa).

It belongs to the DnaA family. In terms of assembly, oligomerizes as a right-handed, spiral filament on DNA at oriC.

The protein localises to the cytoplasm. Plays an essential role in the initiation and regulation of chromosomal replication. ATP-DnaA binds to the origin of replication (oriC) to initiate formation of the DNA replication initiation complex once per cell cycle. Binds the DnaA box (a 9 base pair repeat at the origin) and separates the double-stranded (ds)DNA. Forms a right-handed helical filament on oriC DNA; dsDNA binds to the exterior of the filament while single-stranded (ss)DNA is stabiized in the filament's interior. The ATP-DnaA-oriC complex binds and stabilizes one strand of the AT-rich DNA unwinding element (DUE), permitting loading of DNA polymerase. After initiation quickly degrades to an ADP-DnaA complex that is not apt for DNA replication. Binds acidic phospholipids. This is Chromosomal replication initiator protein DnaA from Xylella fastidiosa (strain 9a5c).